We begin with the raw amino-acid sequence, 395 residues long: MGFFRTLFSFSIFALSLADTSKFIGLDDVDNIIPNSYIVVMKGAVTEAEFKDHQVWASRIHRRSKRDGAADGLDGLKTTFDFQGFKAYCGTFDKESIERITRSSDVDYVEADRVVKMAALNTQRNAPSWGLGRISHKKAGSFDYVYDSDAGSGITIYGVDTGIDIHHPDFGGRATWGVNTVDSENSDQNGHGTHTAGTFAGATYGVAKKARIIAVKVLNAEGTGSTSGVIQGIEWSTNHASSNGLSGKAAMNLSLGVRSSSVFNSAAEAAQRSGIFLAVAAGNDGFSPASARGVCTVAATDAQDQATSWSNYGSTVALYAPGDKILSIYPNGGTATLSGTSMASPHVCGVGAYLMALEGIGPGRVCDRIKQLALESVKNPGPDTTRRLLYNGSGA.

Positions 1 to 20 are cleaved as a signal peptide; it reads MGFFRTLFSFSIFALSLADT. Positions 21–120 are excised as a propeptide; the sequence is SKFIGLDDVD…ADRVVKMAAL (100 aa). The Inhibitor I9 domain occupies 36 to 117; that stretch reads SYIVVMKGAV…YVEADRVVKM (82 aa). One can recognise a Peptidase S8 domain in the interval 128–395; sequence SWGLGRISHK…RRLLYNGSGA (268 aa). Residues aspartate 160 and histidine 191 each act as charge relay system in the active site. Asparagine 252 is a glycosylation site (N-linked (GlcNAc...) asparagine). The active-site Charge relay system is the serine 341. Asparagine 391 is a glycosylation site (N-linked (GlcNAc...) asparagine).

This sequence belongs to the peptidase S8 family.

The protein localises to the secreted. Secreted subtilisin-like serine protease with keratinolytic activity that contributes to pathogenicity. The chain is Subtilisin-like protease 9 (SUB9) from Arthroderma otae (strain ATCC MYA-4605 / CBS 113480) (Microsporum canis).